The chain runs to 101 residues: Large ribosomal subunit protein P1 (101 aa).

The disordered stretch occupies residues 65–89 (AAPAAAPAEEPKEEKKEEKKEEDTT). A compositionally biased stretch (basic and acidic residues) spans 73-87 (EEPKEEKKEEKKEED).

The protein belongs to the eukaryotic ribosomal protein P1/P2 family. Part of the 50S ribosomal subunit. Homodimer, it forms part of the ribosomal stalk which helps the ribosome interact with GTP-bound translation factors. Forms a heptameric uL10/P0(P1)2(P1)2(P1)2 complex, where uL10/P0 forms an elongated spine to which the P1 dimers bind in a sequential fashion.

Its function is as follows. Forms part of the ribosomal stalk, playing a central role in the interaction of the ribosome with GTP-bound translation factors. The polypeptide is Large ribosomal subunit protein P1 (Methanothermococcus thermolithotrophicus (Methanococcus thermolithotrophicus)).